The following is a 361-amino-acid chain: Phosphoserine aminotransferase (361 aa).

Position 42 (R42) interacts with L-glutamate. Pyridoxal 5'-phosphate contacts are provided by residues 76–77 (AR), W102, T153, D173, and Q196. K197 carries the post-translational modification N6-(pyridoxal phosphate)lysine. Residue 238–239 (NT) participates in pyridoxal 5'-phosphate binding.

It belongs to the class-V pyridoxal-phosphate-dependent aminotransferase family. SerC subfamily. Homodimer. The cofactor is pyridoxal 5'-phosphate.

The protein resides in the cytoplasm. It carries out the reaction O-phospho-L-serine + 2-oxoglutarate = 3-phosphooxypyruvate + L-glutamate. The catalysed reaction is 4-(phosphooxy)-L-threonine + 2-oxoglutarate = (R)-3-hydroxy-2-oxo-4-phosphooxybutanoate + L-glutamate. Its pathway is amino-acid biosynthesis; L-serine biosynthesis; L-serine from 3-phospho-D-glycerate: step 2/3. It participates in cofactor biosynthesis; pyridoxine 5'-phosphate biosynthesis; pyridoxine 5'-phosphate from D-erythrose 4-phosphate: step 3/5. Its function is as follows. Catalyzes the reversible conversion of 3-phosphohydroxypyruvate to phosphoserine and of 3-hydroxy-2-oxo-4-phosphonooxybutanoate to phosphohydroxythreonine. The protein is Phosphoserine aminotransferase of Buchnera aphidicola subsp. Schizaphis graminum (strain Sg).